The primary structure comprises 294 residues: MTTLIVSSNRIAQYWALTKPRVTQLAVFCAVIGMFLATPDLPDWKIVIAATIGIWLLAGAAFAINCLVEREIDSRMARTARRPMAQGEITVPQTLVFSGVIGGAGMWVLYNFVNPLTMWLTFATFVGYAVIYTIILKPATPQNIVIGGLSGAMPPALGWAAVANDLPMQAWILVLIIFIWTPPHFWALALYRRDEYAKSGLPMLPITHGTAFTQFHIWLYTIALVATTMLPFAVGMSGLIYLVVAAVLDVIFMWYAWQVYRHYTDMIARKMFTYSIIYLSLLFAALLVDHYLRF.

The next 9 helical transmembrane spans lie at 22-42 (VTQLAVFCAVIGMFLATPDLP), 46-66 (IVIAATIGIWLLAGAAFAINC), 89-109 (ITVPQTLVFSGVIGGAGMWVL), 116-136 (LTMWLTFATFVGYAVIYTIIL), 143-163 (NIVIGGLSGAMPPALGWAAVA), 170-190 (AWILVLIIFIWTPPHFWALAL), 211-231 (AFTQFHIWLYTIALVATTMLP), 232-252 (FAVGMSGLIYLVVAAVLDVIF), and 272-292 (FTYSIIYLSLLFAALLVDHYL).

Belongs to the UbiA prenyltransferase family. Protoheme IX farnesyltransferase subfamily.

It is found in the cell inner membrane. The enzyme catalyses heme b + (2E,6E)-farnesyl diphosphate + H2O = Fe(II)-heme o + diphosphate. It functions in the pathway porphyrin-containing compound metabolism; heme O biosynthesis; heme O from protoheme: step 1/1. Functionally, converts heme B (protoheme IX) to heme O by substitution of the vinyl group on carbon 2 of heme B porphyrin ring with a hydroxyethyl farnesyl side group. This is Protoheme IX farnesyltransferase from Herminiimonas arsenicoxydans.